Reading from the N-terminus, the 159-residue chain is U-actitoxin-Avd13b (159 aa).

The N-terminal stretch at 1-18 (MKSIFLVFFAVCLVKAEA) is a signal peptide. The propeptide occupies 19–26 (GKGRKREP). 2 disulfide bridges follow: C33/C45 and C36/C52. Residues 59–60 (EP) constitute a propeptide that is removed on maturation. Cystine bridges form between C67/C79 and C70/C86. Positions 93-94 (EP) are excised as a propeptide. 2 cysteine pairs are disulfide-bonded: C101-C113 and C104-C120. The propeptide occupies 127 to 128 (EP). Cystine bridges form between C135/C147 and C138/C154.

This sequence belongs to the sea anemone BBH family.

Its subcellular location is the secreted. It localises to the nematocyst. In terms of biological role, inhibits ion channels. The sequence is that of U-actitoxin-Avd13b from Anemonia viridis (Snakelocks anemone).